The following is a 467-amino-acid chain: 3-isopropylmalate dehydratase large subunit (467 aa).

[4Fe-4S] cluster is bound by residues Cys347, Cys407, and Cys410.

It belongs to the aconitase/IPM isomerase family. LeuC type 1 subfamily. Heterodimer of LeuC and LeuD. [4Fe-4S] cluster serves as cofactor.

The catalysed reaction is (2R,3S)-3-isopropylmalate = (2S)-2-isopropylmalate. It functions in the pathway amino-acid biosynthesis; L-leucine biosynthesis; L-leucine from 3-methyl-2-oxobutanoate: step 2/4. Its function is as follows. Catalyzes the isomerization between 2-isopropylmalate and 3-isopropylmalate, via the formation of 2-isopropylmaleate. The protein is 3-isopropylmalate dehydratase large subunit of Crocosphaera subtropica (strain ATCC 51142 / BH68) (Cyanothece sp. (strain ATCC 51142)).